Here is a 712-residue protein sequence, read N- to C-terminus: WD repeat-containing protein 91 (712 aa).

Residues 148–180 (RRTNQVQEENEVLRQKLFALQAEIHRLKKEEQQ) adopt a coiled-coil conformation. Residue Ser-221 is modified to Phosphoserine. The segment covering 230–243 (LLPQSKKSPSRLSP) has biased composition (low complexity). Residues 230 to 336 (LLPQSKKSPS…EAEPCPELHT (107 aa)) are disordered. 2 positions are modified to phosphoserine: Ser-253 and Ser-258. A compositionally biased stretch (basic and acidic residues) spans 297-308 (RLQDHGKERKEL). 7 WD repeats span residues 371-410 (EHHSSIMHCRVDCSGRRVASLDVDGVIKVWSFNPIMQTKA), 413-453 (ISKS…NLCE), 480-520 (AAPS…QQLQ), 525-564 (PEPIAINCTAFNHNGNLLVTGAADGVIRLFDMQQHECAMS), 567-606 (AHYGEVYSVEFSYDENTVYSIGEDGKFIQWNIHKSGLKVS), 629-667 (VQVPRGRLFAFDSEGNYMLTCSATGGVIYKLGGDEKVLE), and 674-712 (GHRAPVVTVDWSTAMDCGTCLTASMDGKIKLTTLLAHKA).

It belongs to the WD repeat WDR91 family. Interacts with WDR81; involved in early to late endosome cargo transport. Interacts with BECN1; negatively regulates the PI3 kinase/PI3K activity associated with endosomal membranes.

The protein localises to the early endosome membrane. It localises to the late endosome membrane. In terms of biological role, functions as a negative regulator of the PI3 kinase/PI3K activity associated with endosomal membranes via BECN1, a core subunit of the PI3K complex. By modifying the phosphatidylinositol 3-phosphate/PtdInsP3 content of endosomal membranes may regulate endosome fusion, recycling, sorting and early to late endosome transport. It is for instance, required for the delivery of cargos like BST2/tetherin from early to late endosome and thereby participates indirectly to their degradation by the lysosome. May play a role in meiosis. The chain is WD repeat-containing protein 91 from Pongo abelii (Sumatran orangutan).